Reading from the N-terminus, the 600-residue chain is Adenine deaminase 3 (600 aa).

This sequence belongs to the metallo-dependent hydrolases superfamily. Adenine deaminase family. It depends on Mn(2+) as a cofactor.

The enzyme catalyses adenine + H2O + H(+) = hypoxanthine + NH4(+). The polypeptide is Adenine deaminase 3 (Rhizobium johnstonii (strain DSM 114642 / LMG 32736 / 3841) (Rhizobium leguminosarum bv. viciae)).